The primary structure comprises 80 residues: WAP four-disulfide core domain protein 15A (80 aa).

Positions 1–20 (MKPSSLLLFTTTILLCLSMA) are cleaved as a signal peptide. In terms of domain architecture, WAP spans 29 to 76 (VTPKQGYCPEFLLDCPFVLLPVCSRDKGCKGTKKCCFYYCQMRCVEPW). Cystine bridges form between cysteine 36–cysteine 64, cysteine 43–cysteine 68, cysteine 51–cysteine 63, and cysteine 57–cysteine 72.

It localises to the secreted. In terms of biological role, antibacterial protein. The chain is WAP four-disulfide core domain protein 15A from Mus musculus (Mouse).